A 572-amino-acid polypeptide reads, in one-letter code: Probable terpene synthase 11 (572 aa).

Mg(2+)-binding residues include Asp-317, Asp-321, and Glu-469. The DDXXD motif signature appears at 317–321 (DDIFD).

It belongs to the terpene synthase family. Requires Mg(2+) as cofactor.

Functionally, probable sesquiterpene synthase. The sequence is that of Probable terpene synthase 11 (TPS11) from Ricinus communis (Castor bean).